Reading from the N-terminus, the 183-residue chain is ATP synthase subunit delta (183 aa).

This sequence belongs to the ATPase delta chain family. In terms of assembly, F-type ATPases have 2 components, F(1) - the catalytic core - and F(0) - the membrane proton channel. F(1) has five subunits: alpha(3), beta(3), gamma(1), delta(1), epsilon(1). F(0) has three main subunits: a(1), b(2) and c(10-14). The alpha and beta chains form an alternating ring which encloses part of the gamma chain. F(1) is attached to F(0) by a central stalk formed by the gamma and epsilon chains, while a peripheral stalk is formed by the delta and b chains.

It localises to the cell inner membrane. Functionally, f(1)F(0) ATP synthase produces ATP from ADP in the presence of a proton or sodium gradient. F-type ATPases consist of two structural domains, F(1) containing the extramembraneous catalytic core and F(0) containing the membrane proton channel, linked together by a central stalk and a peripheral stalk. During catalysis, ATP synthesis in the catalytic domain of F(1) is coupled via a rotary mechanism of the central stalk subunits to proton translocation. In terms of biological role, this protein is part of the stalk that links CF(0) to CF(1). It either transmits conformational changes from CF(0) to CF(1) or is implicated in proton conduction. This Desulfovibrio desulfuricans (strain ATCC 27774 / DSM 6949 / MB) protein is ATP synthase subunit delta.